The following is a 301-amino-acid chain: MSMLFPLHQQLIEQFTIFLSVDRGIAPLSVQAYCQDILLFLQRVPIETTDMINQESVFLFVEKCHQAKESETTLARRLIALKVFFHFLKDAKLIHQQPFIEHPKVWKRLPSILSTEEVNSLLNQPLNTLNLDAYIANRDTAILYTFYATGIRVSELCDLCIGDISDDFIRVTGKGRKTRLVPISIKARQTIDSYLTMFRERFQKKNPSEEHVFLSIRGKKLERSCVWKRITFYAKLVTTKHISPHSLRHAFATHLLNNQADLRIIQEMLGHARISSTEIYTHVASESIIEKFHTHHPRSSS.

One can recognise a Core-binding (CB) domain in the interval 6–89; it reads PLHQQLIEQF…ALKVFFHFLK (84 aa). Residues 108 to 293 form the Tyr recombinase domain; that stretch reads RLPSILSTEE…ASESIIEKFH (186 aa). Active-site residues include R152, K174, H245, R248, and H271. Y280 (O-(3'-phospho-DNA)-tyrosine intermediate) is an active-site residue.

It belongs to the 'phage' integrase family. XerD subfamily. In terms of assembly, forms a cyclic heterotetrameric complex composed of two molecules of XerC and two molecules of XerD.

It localises to the cytoplasm. Site-specific tyrosine recombinase, which acts by catalyzing the cutting and rejoining of the recombining DNA molecules. The XerC-XerD complex is essential to convert dimers of the bacterial chromosome into monomers to permit their segregation at cell division. It also contributes to the segregational stability of plasmids. In Chlamydia muridarum (strain MoPn / Nigg), this protein is Tyrosine recombinase XerD.